Here is an 80-residue protein sequence, read N- to C-terminus: Large ribosomal subunit protein bL31B (80 aa).

It belongs to the bacterial ribosomal protein bL31 family. Type B subfamily. In terms of assembly, part of the 50S ribosomal subunit.

The polypeptide is Large ribosomal subunit protein bL31B (Xylella fastidiosa (strain 9a5c)).